Consider the following 262-residue polypeptide: MGAAAAEADRTLFVGNLETKVTEELLFELFHQAGPVIKVKIPKDKDGKPKQFAFVNFKHEVSVPYAMNLLNGIKLFGRPIKIQFRAGSSHASQEVSLSYPQHHVGNSSPTSTSPSRTVDNMTPSAQTIQRSFSSSENFQRQAVMNNVLRQMSYGGKFGSPHLDQSGFSPSAQSHNHTFNQSSSSQWRQDTPSSQRKVRLNSHPYVMDRHYSREQRYSDLSDHHYRGNRDDFFYEDRNHDGWSHDYDNRRDSGRNGKWRSSRH.

Gly-2 carries the post-translational modification N-acetylglycine. The RRM domain occupies 10–87 (RTLFVGNLET…RPIKIQFRAG (78 aa)). 2 ZCCHC8 binding regions span residues 25–35 (LLFELFHQAGP) and 59–76 (HEVS…IKLF). The tract at residues 95 to 121 (VSLSYPQHHVGNSSPTSTSPSRTVDNM) is disordered. Ser-133 and Ser-134 each carry phosphoserine. Arg-149 carries the omega-N-methylarginine modification. Disordered stretches follow at residues 159–212 (SPHL…HYSR) and 242–262 (SHDY…SSRH). Residues 165–194 (SGFSPSAQSHNHTFNQSSSSQWRQDTPSSQ) are compositionally biased toward polar residues. Ser-201 carries the phosphoserine modification. The span at 242–253 (SHDYDNRRDSGR) shows a compositional bias: basic and acidic residues.

Component of the nuclear exosome targeting (NEXT) complex composed of MTREX, ZCCHC8, and RBM7 that directs a subset of non-coding short-lived RNAs for exosomal degradation. Interacts with ZCCHC8 and SF3B2/SAP145. Binds to MTREX through ZCCHC8. Interacts with YWHAE and YWHAZ; these interactions are stress-dependent and RBM7 phosphorylation dependent; release RNA from the NEXT complex and may affect RNA targeting to the nuclear RNA exosomome for degradation. Interacts with MEPCE and LARP7, the core subunits of 7SK snRNP; upon genotoxic stress this interaction is enhanced, triggering the release of inactive P-TEFb complex from the core and P-TEFb complex activation. Phosphorylated at Ser-133 by MAPK14/p38-alpha-activated MAPKAPK2/MK2; this phosphorylation is stress-dependent; this phosphorylation decreases its RNA-binding capacity therefore affecting RNA nuclear exosome-mediated degradation. This phosphorylation mediates YWHAE and YWHAZ interactions.

The protein resides in the nucleus. Its subcellular location is the nucleoplasm. Its function is as follows. RNA-binding subunit of the trimeric nuclear exosome targeting (NEXT) complex, a complex that functions as an RNA exosome cofactor that directs a subset of non-coding short-lived RNAs for exosomal degradation. NEXT is involved in surveillance and turnover of aberrant transcripts and non-coding RNAs. Binds preferentially polyuridine sequences and associates with newly synthesized RNAs, including pre-mRNAs and short-lived exosome substrates such as promoter upstream transcripts (PROMPTs), enhancer RNAs (eRNAs), and 3'-extended products from small nuclear RNAs (snRNAs). Participates in several biological processes including DNA damage response (DDR) and stress response. During stress response, activation of the p38MAPK-MK2 pathway decreases RBM7-RNA-binding and subsequently the RNA exosome degradation activities, thereby modulating the turnover of non-coding transcriptome. Participates in DNA damage response (DDR), through its interaction with MEPCE and LARP7, the core subunits of 7SK snRNP complex, that release the positive transcription elongation factor b (P-TEFb) complex from the 7SK snRNP. In turn, activation of P-TEFb complex induces the transcription of P-TEFb-dependent DDR genes to promote cell viability. This chain is RNA-binding protein 7, found in Bos taurus (Bovine).